Reading from the N-terminus, the 201-residue chain is ATP-dependent Clp protease proteolytic subunit 2 (201 aa).

Serine 100 acts as the Nucleophile in catalysis. Residue histidine 125 is part of the active site.

This sequence belongs to the peptidase S14 family. Fourteen ClpP subunits assemble into 2 heptameric rings which stack back to back to give a disk-like structure with a central cavity, resembling the structure of eukaryotic proteasomes.

It localises to the cytoplasm. It carries out the reaction Hydrolysis of proteins to small peptides in the presence of ATP and magnesium. alpha-casein is the usual test substrate. In the absence of ATP, only oligopeptides shorter than five residues are hydrolyzed (such as succinyl-Leu-Tyr-|-NHMec, and Leu-Tyr-Leu-|-Tyr-Trp, in which cleavage of the -Tyr-|-Leu- and -Tyr-|-Trp bonds also occurs).. In terms of biological role, cleaves peptides in various proteins in a process that requires ATP hydrolysis. Has a chymotrypsin-like activity. Plays a major role in the degradation of misfolded proteins. The sequence is that of ATP-dependent Clp protease proteolytic subunit 2 from Corynebacterium glutamicum (strain ATCC 13032 / DSM 20300 / JCM 1318 / BCRC 11384 / CCUG 27702 / LMG 3730 / NBRC 12168 / NCIMB 10025 / NRRL B-2784 / 534).